The primary structure comprises 508 residues: MGLPWYRVHTVVLNDPGRLLSVHIMHTALVAGWAGSMALYELAVFDPSDPVLDPMWRQGMFVIPFMTRLGITNSWGGWNITGGAITNPGIWSYEGVAGAHIVFSGLCFLAAIWHWVYWDLEIFCDERTGKPSLDLPKIFGIHLFLAGVACFGFGAFHVTGLYGPGIWVSDPYGLTGRIQSVNPAWGVEGFDPFVPGGVASHHIAAGTLGILAGLFHLSVRPPQRLYKGLRMGNIETVLSSSIAAVFFAAFVVAGTMWYGSATTPIELFGPTRYQWDQGYFQQEIYRRVGAGLAENQNLTEAWSKIPEKLAFYDYIGNNPAKGGLFRAGSMDNGDGIAVGWLGHPIFRDKEGHELFVRRMPTFFETFPVVLVDGDGIVRADVPFRRAESKYSVEQVGVTVEFYGGELNGISYSDPTTVKKYARRAQLGEIFELDRATLKSDGVFRSSPRGWFTFGHASFALLFFFGHIWHGARTLFRDVFAGIDPDLDAQVEFGAFQKLGDPTTRRQVV.

The next 6 membrane-spanning stretches (helical) occupy residues 21–36 (SVHIMHTALVAGWAGS), 101–115 (IVFSGLCFLAAIWHW), 140–156 (GIHLFLAGVACFGFGAF), 203–218 (IAAGTLGILAGLFHLS), 237–252 (VLSSSIAAVFFAAFVV), and 457–472 (SFALLFFFGHIWHGAR).

This sequence belongs to the PsbB/PsbC family. PsbB subfamily. As to quaternary structure, PSII is composed of 1 copy each of membrane proteins PsbA, PsbB, PsbC, PsbD, PsbE, PsbF, PsbH, PsbI, PsbJ, PsbK, PsbL, PsbM, PsbT, PsbX, PsbY, PsbZ, Psb30/Ycf12, at least 3 peripheral proteins of the oxygen-evolving complex and a large number of cofactors. It forms dimeric complexes. The cofactor is Binds multiple chlorophylls. PSII binds additional chlorophylls, carotenoids and specific lipids..

Its subcellular location is the plastid. The protein resides in the chloroplast thylakoid membrane. Its function is as follows. One of the components of the core complex of photosystem II (PSII). It binds chlorophyll and helps catalyze the primary light-induced photochemical processes of PSII. PSII is a light-driven water:plastoquinone oxidoreductase, using light energy to abstract electrons from H(2)O, generating O(2) and a proton gradient subsequently used for ATP formation. The polypeptide is Photosystem II CP47 reaction center protein (Phaseolus vulgaris (Kidney bean)).